A 178-amino-acid chain; its full sequence is Large ribosomal subunit protein uL6 (178 aa).

Belongs to the universal ribosomal protein uL6 family. Part of the 50S ribosomal subunit.

Functionally, this protein binds to the 23S rRNA, and is important in its secondary structure. It is located near the subunit interface in the base of the L7/L12 stalk, and near the tRNA binding site of the peptidyltransferase center. The polypeptide is Large ribosomal subunit protein uL6 (Ligilactobacillus salivarius (strain UCC118) (Lactobacillus salivarius)).